A 1184-amino-acid chain; its full sequence is DNA-directed RNA polymerase subunit beta (1184 aa).

Residues 1160–1184 (DDDFTNQNDAFNIVQPENAAAEKTE) are disordered.

This sequence belongs to the RNA polymerase beta chain family. As to quaternary structure, the RNAP catalytic core consists of 2 alpha, 1 beta, 1 beta' and 1 omega subunit. When a sigma factor is associated with the core the holoenzyme is formed, which can initiate transcription.

The enzyme catalyses RNA(n) + a ribonucleoside 5'-triphosphate = RNA(n+1) + diphosphate. Functionally, DNA-dependent RNA polymerase catalyzes the transcription of DNA into RNA using the four ribonucleoside triphosphates as substrates. The sequence is that of DNA-directed RNA polymerase subunit beta from Listeria monocytogenes serotype 4b (strain F2365).